We begin with the raw amino-acid sequence, 360 residues long: Putative F-box protein At3g47150 (360 aa).

Residues 6–56 enclose the F-box domain; the sequence is NTTQIYIPLDLQINILLRLPVKSLLRFRCVSKLWCSIITSHDFRNRHFNIT.

In Arabidopsis thaliana (Mouse-ear cress), this protein is Putative F-box protein At3g47150.